Reading from the N-terminus, the 309-residue chain is THAP domain-containing protein 7 (309 aa).

The THAP-type zinc-finger motif lies at 1 to 93; it reads MPRHCSAAGC…LKEGAVPTIF (93 aa). Serine 162 is modified (phosphoserine). A disordered region spans residues 176 to 210; it reads SDLLGPLGAQADEAGCSTQPSPEQHPSPLEPQPAS. Positions 198–209 are enriched in pro residues; sequence EQHPSPLEPQPA. The residue at position 210 (serine 210) is a Phosphoserine. The HCFC1-binding motif (HBM) signature appears at 229–232; sequence EHSY.

As to quaternary structure, forms homodimers. Interacts with HDAC3 and nuclear hormone receptor corepressors. Interacts via HBM with HCFC1.

It is found in the nucleus. Its subcellular location is the chromosome. Functionally, chromatin-associated, histone tail-binding protein that represses transcription via recruitment of HDAC3 and nuclear hormone receptor corepressors. In Mus musculus (Mouse), this protein is THAP domain-containing protein 7 (Thap7).